Reading from the N-terminus, the 256-residue chain is Small ribosomal subunit protein eS1 (256 aa).

Alanine 2 carries the post-translational modification N-acetylalanine; partial.

It belongs to the eukaryotic ribosomal protein eS1 family. Component of the small ribosomal subunit. Mature ribosomes consist of a small (40S) and a large (60S) subunit. The 40S subunit contains about 33 different proteins and 1 molecule of RNA (18S). The 60S subunit contains about 49 different proteins and 3 molecules of RNA (25S, 5.8S and 5S).

The protein resides in the cytoplasm. This Candida tropicalis (strain ATCC MYA-3404 / T1) (Yeast) protein is Small ribosomal subunit protein eS1.